A 572-amino-acid chain; its full sequence is MMGSENDEESHLHSSKEEMEKLFLREDGDPLTKSNVNGDKSNSNYRSAMSTLFDSRHPSIVVTPADSDPLFAPPSYYSESRSPRSKPNGGDRVSSYLEPPSYADVIFSPFDDISEINGSEDGHSQSSDSLSRSPSSLSSDYIKITVSNPQKEQEATNSMIPGGSTYITYQITTRTNLSDYGGSEFSVRRRFRDIVTLADRLAESYRGFCIPPRPDKSIVESQVMQKQEFVEQRRVALEKYLRRLVAHPVIRNSDELKVFLQAQGKLPLATSTDVASRMLDGAVKLPKQLFGEGGGASSVEVVQPGRGGRDFLRMFKELRQSVSNDWGGSKPPVVEEDKEFLEKKEKMYDLEQQIINASQQAESLVKAQQDMGETMGELGLAFIKLTKFENEEAVFNSQRARANDMKNLATSAVKASRFYRELNSQTVKHLDTLHDYLGLMMAVQGAFADRSSALLTVQTLLSELSSLEARAEKLEVASSKVFGGDKSRIKKIEELKETIKVTEDSKNVAIREYEQIKENNWSEVERLDRERRADFLNMMKGFVANQVGYAEKIANVWTKVAEETRQYDRESS.

2 disordered regions span residues 1–97 (MMGS…SSYL) and 114–136 (SEINGSEDGHSQSSDSLSRSPSS). The segment covering 9-30 (ESHLHSSKEEMEKLFLREDGDP) has biased composition (basic and acidic residues). The span at 32–53 (TKSNVNGDKSNSNYRSAMSTLF) shows a compositional bias: polar residues. Residues 124–136 (SQSSDSLSRSPSS) are compositionally biased toward low complexity. Ser-133 is subject to Phosphoserine. Residues 147–266 (SNPQKEQEAT…KVFLQAQGKL (120 aa)) enclose the PX domain. A 1,2-diacyl-sn-glycero-3-phospho-(1D-myo-inositol-3-phosphate) contacts are provided by Arg-190, Lys-216, and Arg-233. A BAR domain is found at 318–572 (LRQSVSNDWG…ETRQYDRESS (255 aa)).

The protein belongs to the sorting nexin family. In terms of assembly, homodimer. Heterodimer with SNX1 or SNX2B. Component of the retromer complex which consists of VPS29 (MAG1), VPS26 (VPS26A or VPS26B), VPS35 (VPS35A or VPS35B or VPS35C), VPS5/17 (SNX1 or SNX2A or SNX2B). As to expression, ubiquitously expressed.

The protein resides in the cytoplasm. It localises to the endosome membrane. It is found in the prevacuolar compartment membrane. Its subcellular location is the golgi apparatus. The protein localises to the trans-Golgi network membrane. In terms of biological role, plays a role in vesicular protein sorting. Acts at the crossroads between the secretory and endocytic pathways. Is involved in the endosome to vacuole protein transport and, as component of the membrane-associated retromer complex, is also involved in endosome-to-Golgi retrograde transport. The protein is Sorting nexin 2B (SNX2B) of Arabidopsis thaliana (Mouse-ear cress).